Here is a 257-residue protein sequence, read N- to C-terminus: Glutamate racemase (257 aa).

Substrate-binding positions include 12–13 (DS) and 44–45 (YG). Cys-75 acts as the Proton donor/acceptor in catalysis. 76–77 (NT) is a binding site for substrate. Cys-176 (proton donor/acceptor) is an active-site residue. Substrate is bound at residue 177–178 (TH).

It belongs to the aspartate/glutamate racemases family.

It catalyses the reaction L-glutamate = D-glutamate. It participates in cell wall biogenesis; peptidoglycan biosynthesis. Its function is as follows. Provides the (R)-glutamate required for cell wall biosynthesis. In Thermus thermophilus (strain ATCC BAA-163 / DSM 7039 / HB27), this protein is Glutamate racemase.